We begin with the raw amino-acid sequence, 451 residues long: Glutamyl-tRNA(Gln) amidotransferase subunit D (451 aa).

Positions 78–97 are disordered; it reads PREAPTPGEEEGSQEDFGQP. Residues 99-432 enclose the Asparaginase/glutaminase domain; sequence PRVFFVGTGG…EEIQRLFTAN (334 aa). Residues Thr-109, Thr-187, Asp-188, and Lys-266 contribute to the active site.

The protein belongs to the asparaginase 1 family. GatD subfamily. As to quaternary structure, heterodimer of GatD and GatE.

The enzyme catalyses L-glutamyl-tRNA(Gln) + L-glutamine + ATP + H2O = L-glutaminyl-tRNA(Gln) + L-glutamate + ADP + phosphate + H(+). Its function is as follows. Allows the formation of correctly charged Gln-tRNA(Gln) through the transamidation of misacylated Glu-tRNA(Gln) in organisms which lack glutaminyl-tRNA synthetase. The reaction takes place in the presence of glutamine and ATP through an activated gamma-phospho-Glu-tRNA(Gln). The GatDE system is specific for glutamate and does not act on aspartate. The sequence is that of Glutamyl-tRNA(Gln) amidotransferase subunit D from Thermofilum pendens (strain DSM 2475 / Hrk 5).